The primary structure comprises 574 residues: PI-PLC X domain-containing protein DDB_G0269228 (574 aa).

A disordered region spans residues 1–42 (MFSSIMFKKKPKQNLNENEITSQSTTTTSTLSDSKPSEKKIK). Residues 21–34 (TSQSTTTTSTLSDS) are compositionally biased toward low complexity. In terms of domain architecture, PI-PLC X-box spans 270–449 (GIKSSSLRVP…LKKRIINDDG (180 aa)).

The chain is PI-PLC X domain-containing protein DDB_G0269228 from Dictyostelium discoideum (Social amoeba).